We begin with the raw amino-acid sequence, 994 residues long: Phosphoenolpyruvate carboxylase (994 aa).

The segment at 1–67 (MKAVRSDKTT…GRTREDKDHP (67 aa)) is disordered. Composition is skewed to low complexity over residues 9–24 (TTQA…PAKA) and 34–57 (AAPQ…PKAN). Active-site residues include His-204 and Lys-646.

This sequence belongs to the PEPCase type 1 family. Mg(2+) serves as cofactor.

It carries out the reaction oxaloacetate + phosphate = phosphoenolpyruvate + hydrogencarbonate. Its function is as follows. Forms oxaloacetate, a four-carbon dicarboxylic acid source for the tricarboxylic acid cycle. In Paraburkholderia xenovorans (strain LB400), this protein is Phosphoenolpyruvate carboxylase.